Reading from the N-terminus, the 405-residue chain is MNASGSAPLGANSEVGQLRAVLLHRPGDELKRLTPRNNDQLLFDGLPWVDRAQEEHDAFADLLRSRGVEVLLLSDLLTETLGASGAARIQGIGAAVDARKLGHTLAQELAAHLRGVPAPDLSTILTAGMTFDELPVAANTASLVRRMHHGGDFVIDPLPNLLFTRDSSFWIGPRVAITSLALPARVRETSLTDIIYAHHPRFRGARRAYESHTAPVEGGDVLLLAPGVVAVGVGERTTPAGAEALARSVFEDELAHTVLVVPIAQARASMHLDTVCTMVDHDAVVMYPIIQDTLSAFTIHREDKGVSIRGADPFLTAAAEAMGIGKLRVIDTGLDNVTAEREQWDDGNNTLALAPGVVVAYERNVETNARLEASGIEVLRIAGSELGSGRGGPRCMSCPVARDPL.

The active-site Amidino-cysteine intermediate is the C395.

It belongs to the arginine deiminase family.

The protein resides in the cytoplasm. The enzyme catalyses L-arginine + H2O = L-citrulline + NH4(+). It functions in the pathway amino-acid degradation; L-arginine degradation via ADI pathway; carbamoyl phosphate from L-arginine: step 1/2. The chain is Arginine deiminase from Rhodococcus jostii (strain RHA1).